The chain runs to 20 residues: Large ribosomal subunit protein uL5 (20 aa).

This sequence belongs to the universal ribosomal protein uL5 family. Part of the 50S ribosomal subunit; part of the 5S rRNA/L5/L18/L25 subcomplex. Contacts the 5S rRNA and the P site tRNA. Forms a bridge to the 30S subunit in the 70S ribosome.

This is one of the proteins that bind and probably mediate the attachment of the 5S RNA into the large ribosomal subunit, where it forms part of the central protuberance. In the 70S ribosome it contacts protein S13 of the 30S subunit (bridge B1b), connecting the two subunits; this bridge is implicated in subunit movement. Contacts the P site tRNA; the 5S rRNA and some of its associated proteins might help stabilize positioning of ribosome-bound tRNAs. The sequence is that of Large ribosomal subunit protein uL5 (rplE) from Bacillus cereus.